Reading from the N-terminus, the 169-residue chain is Allophycocyanin subunit beta-18 (169 aa).

Asparagine 72 carries the post-translational modification N4-methylasparagine. Residue cysteine 82 participates in (2R,3E)-phycocyanobilin binding.

It belongs to the phycobiliprotein family. In terms of assembly, heterodimer of an alpha and a beta chain. Post-translationally, contains one covalently linked bilin chromophore.

Its subcellular location is the plastid. It localises to the chloroplast thylakoid membrane. Its function is as follows. Light-harvesting photosynthetic bile pigment-protein from the phycobiliprotein complex. Allophycocyanin has a maximum absorption at approximately 650 nanometers. The sequence is that of Allophycocyanin subunit beta-18 (apcF) from Porphyra purpurea (Red seaweed).